A 250-amino-acid chain; its full sequence is Triosephosphate isomerase (250 aa).

Residue Asn9–Lys11 participates in substrate binding. Residue His95 is the Electrophile of the active site. Glu167 (proton acceptor) is an active-site residue. Residues Gly173, Ser212, and Gly233–Gly234 each bind substrate.

This sequence belongs to the triosephosphate isomerase family. Homodimer.

The protein localises to the cytoplasm. The enzyme catalyses D-glyceraldehyde 3-phosphate = dihydroxyacetone phosphate. It participates in carbohydrate biosynthesis; gluconeogenesis. Its pathway is carbohydrate degradation; glycolysis; D-glyceraldehyde 3-phosphate from glycerone phosphate: step 1/1. Involved in the gluconeogenesis. Catalyzes stereospecifically the conversion of dihydroxyacetone phosphate (DHAP) to D-glyceraldehyde-3-phosphate (G3P). In Psychromonas ingrahamii (strain DSM 17664 / CCUG 51855 / 37), this protein is Triosephosphate isomerase.